The sequence spans 334 residues: Glutaminase (334 aa).

Substrate contacts are provided by Ser76, Asn126, Glu170, Asn177, Tyr201, Tyr253, and Val271.

The protein belongs to the glutaminase family. Homotetramer.

It carries out the reaction L-glutamine + H2O = L-glutamate + NH4(+). The protein is Glutaminase of Nostoc sp. (strain PCC 7120 / SAG 25.82 / UTEX 2576).